The primary structure comprises 158 residues: 6,7-dimethyl-8-ribityllumazine synthase (158 aa).

5-amino-6-(D-ribitylamino)uracil contacts are provided by residues F24, 58–60 (AFE), and 82–84 (AVI). 87–88 (GT) lines the (2S)-2-hydroxy-3-oxobutyl phosphate pocket. Catalysis depends on H90, which acts as the Proton donor. F115 provides a ligand contact to 5-amino-6-(D-ribitylamino)uracil. Residue R129 coordinates (2S)-2-hydroxy-3-oxobutyl phosphate.

The protein belongs to the DMRL synthase family. In terms of assembly, forms an icosahedral capsid composed of 60 subunits, arranged as a dodecamer of pentamers.

It carries out the reaction (2S)-2-hydroxy-3-oxobutyl phosphate + 5-amino-6-(D-ribitylamino)uracil = 6,7-dimethyl-8-(1-D-ribityl)lumazine + phosphate + 2 H2O + H(+). It functions in the pathway cofactor biosynthesis; riboflavin biosynthesis; riboflavin from 2-hydroxy-3-oxobutyl phosphate and 5-amino-6-(D-ribitylamino)uracil: step 1/2. Its function is as follows. Catalyzes the formation of 6,7-dimethyl-8-ribityllumazine by condensation of 5-amino-6-(D-ribitylamino)uracil with 3,4-dihydroxy-2-butanone 4-phosphate. This is the penultimate step in the biosynthesis of riboflavin. In Ectopseudomonas mendocina (strain ymp) (Pseudomonas mendocina), this protein is 6,7-dimethyl-8-ribityllumazine synthase.